We begin with the raw amino-acid sequence, 236 residues long: Protein YIPF6 (236 aa).

Ala-2 carries the N-acetylalanine modification. Over 2–84 (AEAEDSPGEQ…HVLYPRKSNT (83 aa)) the chain is Cytoplasmic. Residue Ser-7 is modified to Phosphoserine. The helical transmembrane segment at 85 to 105 (LLRDWDLWGPLILCVSLALML) threads the bilayer. The Lumenal portion of the chain corresponds to 106-116 (QKSSVEGKRDG). The chain crosses the membrane as a helical span at residues 117-137 (GSPEFAEVFVIIWFGAVTITL). At 138-147 (NSKLLGGNIS) the chain is on the cytoplasmic side. The helical transmembrane segment at 148-168 (FFQSLCVLGYCVLPLNIAMLI) threads the bilayer. Residues 169–185 (CRLLLLAGQGPINFMIR) are Lumenal-facing. The chain crosses the membrane as a helical span at residues 186-206 (LFVVLVMFAWSVIASTAFLAD). Residues 207–213 (CQPPNRK) are Cytoplasmic-facing. The helical transmembrane segment at 214–234 (ALAVYPVFLFYFVVSWMILTF) threads the bilayer. Topologically, residues 235 to 236 (TP) are lumenal.

Belongs to the YIP1 family. As to quaternary structure, predominantly interacts with YIPF1 or YIPF2, but may also form a ternary complex with YIPF1 and YIPF2. This interaction may stabilize YIPF1 and YIPF2.

The protein resides in the golgi apparatus membrane. In terms of biological role, may be required for stable YIPF1 and YIPF2 protein expression. The polypeptide is Protein YIPF6 (Yipf6) (Rattus norvegicus (Rat)).